A 228-amino-acid polypeptide reads, in one-letter code: Thermonuclease (228 aa).

Positions Met-1–Ala-23 are cleaved as a signal peptide. Positions Ile-24 to Ala-60 are excised as a propeptide. Asp-100 contacts Ca(2+). Arg-114 is an active-site residue. Ca(2+) contacts are provided by Asp-119 and Thr-120. Active-site residues include Glu-122 and Arg-166.

The protein belongs to the thermonuclease family. It depends on Ca(2+) as a cofactor.

It localises to the secreted. It carries out the reaction Endonucleolytic cleavage to nucleoside 3'-phosphates and 3'-phosphooligonucleotide end-products.. Its function is as follows. Enzyme that catalyzes the hydrolysis of both DNA and RNA at the 5' position of the phosphodiester bond. The sequence is that of Thermonuclease (nuc) from Staphylococcus aureus (strain MRSA252).